A 214-amino-acid chain; its full sequence is Adenylate kinase (214 aa).

Gly-10–Thr-15 is an ATP binding site. The interval Ser-30–Val-59 is NMP. AMP-binding positions include Thr-31, Arg-36, Glu-57–Val-59, Gly-85–Arg-88, and Gln-92. An LID region spans residues Gly-126–Asp-163. Arg-127 provides a ligand contact to ATP. 2 residues coordinate Zn(2+): Cys-130 and Cys-133. Thr-136–Tyr-137 is an ATP binding site. Residues Cys-150 and Cys-153 each coordinate Zn(2+). AMP-binding residues include Arg-160 and Arg-171. ATP is bound at residue Lys-199.

This sequence belongs to the adenylate kinase family. As to quaternary structure, monomer.

Its subcellular location is the cytoplasm. It catalyses the reaction AMP + ATP = 2 ADP. Its pathway is purine metabolism; AMP biosynthesis via salvage pathway; AMP from ADP: step 1/1. Its function is as follows. Catalyzes the reversible transfer of the terminal phosphate group between ATP and AMP. Plays an important role in cellular energy homeostasis and in adenine nucleotide metabolism. The chain is Adenylate kinase from Carboxydothermus hydrogenoformans (strain ATCC BAA-161 / DSM 6008 / Z-2901).